The sequence spans 355 residues: F-box only protein 32 (355 aa).

Residues 62–67 carry the Nuclear localization signal motif; it reads KKRKKD. The short motif at 169–173 is the Nuclear export signal element; it reads LLQTL. The F-box domain occupies 223-271; sequence LTITDLPVCLQLNIMQRLSDGRDLVSLGQAAPDLHVLSEDRLLWKRLCQ. Positions 280-295 match the Bipartite nuclear localization signal motif; it reads RKRLILSDKGQLDWKK.

Part of the SCF (SKP1-CUL1-F-box) E3 ubiquitin-protein ligase complex SCF(FBXO32) formed of CUL1, SKP1, RBX1 and FBXO32. In terms of tissue distribution, specifically expressed in cardiac and skeletal muscle.

Its subcellular location is the cytoplasm. It localises to the nucleus. It participates in protein modification; protein ubiquitination. Substrate recognition component of a SCF (SKP1-CUL1-F-box protein) E3 ubiquitin-protein ligase complex which mediates the ubiquitination and subsequent proteasomal degradation of target proteins. Probably recognizes and binds to phosphorylated target proteins during skeletal muscle atrophy. Recognizes TERF1. The protein is F-box only protein 32 (Fbxo32) of Mus musculus (Mouse).